A 156-amino-acid polypeptide reads, in one-letter code: Small ribosomal subunit protein uS7 (156 aa).

It belongs to the universal ribosomal protein uS7 family. In terms of assembly, part of the 30S ribosomal subunit. Contacts proteins S9 and S11.

In terms of biological role, one of the primary rRNA binding proteins, it binds directly to 16S rRNA where it nucleates assembly of the head domain of the 30S subunit. Is located at the subunit interface close to the decoding center, probably blocks exit of the E-site tRNA. The protein is Small ribosomal subunit protein uS7 of Lactobacillus johnsonii (strain CNCM I-12250 / La1 / NCC 533).